We begin with the raw amino-acid sequence, 190 residues long: Cell division protein SepF (190 aa).

Belongs to the SepF family. Homodimer. Interacts with FtsZ.

Its subcellular location is the cytoplasm. Functionally, cell division protein that is part of the divisome complex and is recruited early to the Z-ring. Probably stimulates Z-ring formation, perhaps through the cross-linking of FtsZ protofilaments. Its function overlaps with FtsA. This chain is Cell division protein SepF, found in Synechococcus sp. (strain WH7803).